Here is a 599-residue protein sequence, read N- to C-terminus: Elongation factor 4 (599 aa).

In terms of domain architecture, tr-type G spans 2–184 (KNIRNFSIIA…EIVAKIPAPK (183 aa)). Residues 14–19 (DHGKST) and 131–134 (NKID) contribute to the GTP site.

Belongs to the TRAFAC class translation factor GTPase superfamily. Classic translation factor GTPase family. LepA subfamily.

It is found in the cell inner membrane. It catalyses the reaction GTP + H2O = GDP + phosphate + H(+). In terms of biological role, required for accurate and efficient protein synthesis under certain stress conditions. May act as a fidelity factor of the translation reaction, by catalyzing a one-codon backward translocation of tRNAs on improperly translocated ribosomes. Back-translocation proceeds from a post-translocation (POST) complex to a pre-translocation (PRE) complex, thus giving elongation factor G a second chance to translocate the tRNAs correctly. Binds to ribosomes in a GTP-dependent manner. This Mannheimia succiniciproducens (strain KCTC 0769BP / MBEL55E) protein is Elongation factor 4.